The sequence spans 1090 residues: Aminopeptidase-like protein AC3.5 (1090 aa).

The Cytoplasmic segment spans residues 1–77; it reads MEDVDLGKDR…KPKKRIACSP (77 aa). Residues 21–33 are compositionally biased toward low complexity; it reads GNGSASNLNNRNN. Positions 21-71 are disordered; it reads GNGSASNLNNRNNIPLSEKAAKEPLQTQPQEAPPAPKPKVQKQKPPVKPKK. Over residues 59 to 71 the composition is skewed to basic residues; it reads KVQKQKPPVKPKK. Residues 78–98 traverse the membrane as a helical; Signal-anchor for type II membrane protein segment; the sequence is GSAICLFLLAVAAIIFAAFLG. The Lumenal portion of the chain corresponds to 99–1090; that stretch reads HYLTKQNYEM…DEMESSEEQE (992 aa). N-linked (GlcNAc...) asparagine glycans are attached at residues Asn115, Asn123, Asn143, Asn176, and Asn230. A disordered region spans residues 217–259; the sequence is VTKRAKKSVDSGTNSTSEMPEGSGEEAMATTATTTTTESTTPV. Positions 241-257 are enriched in low complexity; the sequence is EEAMATTATTTTTESTT. N-linked (GlcNAc...) asparagine glycans are attached at residues Asn402, Asn710, Asn723, Asn789, Asn894, Asn919, Asn964, and Asn993. Basic and acidic residues predominate over residues 1069 to 1080; it reads YLDGKMKGPAKD. Positions 1069–1090 are disordered; sequence YLDGKMKGPAKDDEMESSEEQE. Positions 1081–1090 are enriched in acidic residues; the sequence is DEMESSEEQE.

It belongs to the peptidase M1 family.

The protein resides in the membrane. The chain is Aminopeptidase-like protein AC3.5 from Caenorhabditis elegans.